The chain runs to 86 residues: Selenoprotein W (86 aa).

The cysteinyl-selenocysteine (Cys-Sec); redox-active cross-link spans 10-13 (CGGU). Residue U13 is a non-standard amino acid, selenocysteine.

The protein belongs to the SelWTH family. Selenoprotein W subfamily.

It is found in the cytoplasm. In terms of biological role, plays a role as a glutathione (GSH)-dependent antioxidant. May be involved in a redox-related process. May play a role in the myopathies of selenium deficiency. The sequence is that of Selenoprotein W from Danio rerio (Zebrafish).